Reading from the N-terminus, the 799-residue chain is Phenylalanine--tRNA ligase beta subunit (799 aa).

The 108-residue stretch at 40 to 147 folds into the tRNA-binding domain; sequence KSHLSSVITV…KDTTLGISVR (108 aa). The region spanning 402–479 is the B5 domain; that stretch reads SKTVTIETNL…RTIGYASIRT (78 aa). Mg(2+) contacts are provided by aspartate 457, aspartate 463, glutamate 466, and glutamate 467. Residues 707–799 form the FDX-ACB domain; that stretch reads SHFPQGQLDL…TAKSNGYSLR (93 aa).

It belongs to the phenylalanyl-tRNA synthetase beta subunit family. Type 1 subfamily. Tetramer of two alpha and two beta subunits. It depends on Mg(2+) as a cofactor.

The protein resides in the cytoplasm. It carries out the reaction tRNA(Phe) + L-phenylalanine + ATP = L-phenylalanyl-tRNA(Phe) + AMP + diphosphate + H(+). The sequence is that of Phenylalanine--tRNA ligase beta subunit from Leptospira biflexa serovar Patoc (strain Patoc 1 / Ames).